Consider the following 162-residue polypeptide: NADH-quinone oxidoreductase subunit I (162 aa).

4Fe-4S ferredoxin-type domains follow at residues 54–83 (RRYENGEERCIACKLCEAVCPALAITIESE) and 93–122 (TRYDIDLTKCIFCGFCEESCPVDSIVETQI). [4Fe-4S] cluster is bound by residues C63, C66, C69, C73, C102, C105, C108, and C112.

The protein belongs to the complex I 23 kDa subunit family. NDH-1 is composed of 14 different subunits. Subunits NuoA, H, J, K, L, M, N constitute the membrane sector of the complex. [4Fe-4S] cluster is required as a cofactor.

The protein localises to the cell inner membrane. The catalysed reaction is a quinone + NADH + 5 H(+)(in) = a quinol + NAD(+) + 4 H(+)(out). In terms of biological role, NDH-1 shuttles electrons from NADH, via FMN and iron-sulfur (Fe-S) centers, to quinones in the respiratory chain. The immediate electron acceptor for the enzyme in this species is believed to be ubiquinone. Couples the redox reaction to proton translocation (for every two electrons transferred, four hydrogen ions are translocated across the cytoplasmic membrane), and thus conserves the redox energy in a proton gradient. The chain is NADH-quinone oxidoreductase subunit I from Burkholderia mallei (strain NCTC 10247).